The chain runs to 176 residues: ATP synthase subunit b (176 aa).

The helical transmembrane segment at 26-45 (VINLAIIIGVLVYFGRGLLG) threads the bilayer.

It belongs to the ATPase B chain family. F-type ATPases have 2 components, F(1) - the catalytic core - and F(0) - the membrane proton channel. F(1) has five subunits: alpha(3), beta(3), gamma(1), delta(1), epsilon(1). F(0) has four main subunits: a(1), b(1), b'(1) and c(10-14). The alpha and beta chains form an alternating ring which encloses part of the gamma chain. F(1) is attached to F(0) by a central stalk formed by the gamma and epsilon chains, while a peripheral stalk is formed by the delta, b and b' chains.

Its subcellular location is the cellular thylakoid membrane. In terms of biological role, f(1)F(0) ATP synthase produces ATP from ADP in the presence of a proton or sodium gradient. F-type ATPases consist of two structural domains, F(1) containing the extramembraneous catalytic core and F(0) containing the membrane proton channel, linked together by a central stalk and a peripheral stalk. During catalysis, ATP synthesis in the catalytic domain of F(1) is coupled via a rotary mechanism of the central stalk subunits to proton translocation. Component of the F(0) channel, it forms part of the peripheral stalk, linking F(1) to F(0). This is ATP synthase subunit b from Synechococcus sp. (strain PCC 6716).